Consider the following 171-residue polypeptide: tRNA-splicing endonuclease subunit Sen15 (171 aa).

Residues Met-1–Pro-35 are disordered. Ser-7 is modified (phosphoserine). The segment covering Ser-14 to Ala-30 has biased composition (gly residues). Position 168 is a phosphoserine (Ser-168).

The protein belongs to the SEN15 family. In terms of assembly, homodimer. tRNA splicing endonuclease is a heterotetramer composed of TSEN2, TSEN15, TSEN34/LENG5 and TSEN54. tRNA splicing endonuclease complex also contains proteins of the Pre-mRNA 3' end processing machinery, such as CLP1, CPSF1, CPSF4 and CSTF2. Widely expressed. Highly expressed in testis and uterus.

It is found in the nucleus. Its subcellular location is the nucleolus. Functionally, non-catalytic subunit of the tRNA-splicing endonuclease complex, a complex responsible for identification and cleavage of the splice sites in pre-tRNA. It cleaves pre-tRNA at the 5' and 3' splice sites to release the intron. The products are an intron and two tRNA half-molecules bearing 2',3' cyclic phosphate and 5'-OH termini. There are no conserved sequences at the splice sites, but the intron is invariably located at the same site in the gene, placing the splice sites an invariant distance from the constant structural features of the tRNA body. The tRNA splicing endonuclease is also involved in mRNA processing via its association with pre-mRNA 3'-end processing factors, establishing a link between pre-tRNA splicing and pre-mRNA 3'-end formation, suggesting that the endonuclease subunits function in multiple RNA-processing events. This Homo sapiens (Human) protein is tRNA-splicing endonuclease subunit Sen15 (TSEN15).